Reading from the N-terminus, the 189-residue chain is Glycerol-3-phosphate acyltransferase 1 (189 aa).

Transmembrane regions (helical) follow at residues 12–32 (MQFL…AYIV), 61–81 (GYFV…VSIA), 88–108 (FTFV…PMLF), 124–144 (IAFD…FYLI), and 164–184 (ILYS…VLIL).

Belongs to the PlsY family. In terms of assembly, probably interacts with PlsX.

The protein resides in the cell membrane. The catalysed reaction is an acyl phosphate + sn-glycerol 3-phosphate = a 1-acyl-sn-glycero-3-phosphate + phosphate. Its pathway is lipid metabolism; phospholipid metabolism. Functionally, catalyzes the transfer of an acyl group from acyl-phosphate (acyl-PO(4)) to glycerol-3-phosphate (G3P) to form lysophosphatidic acid (LPA). This enzyme utilizes acyl-phosphate as fatty acyl donor, but not acyl-CoA or acyl-ACP. This Bacillus anthracis protein is Glycerol-3-phosphate acyltransferase 1.